We begin with the raw amino-acid sequence, 518 residues long: Glycerophosphoinositol transporter 1 (518 aa).

At 1–44 the chain is on the cytoplasmic side; that stretch reads MEDKDITSVNEKEVNENTNPRIIKYDAERRATRTETSKKDKWKN. The helical transmembrane segment at 45 to 65 threads the bilayer; that stretch reads IVTIIASGFALISDGYVNGSM. The Extracellular segment spans residues 66–91; sequence SMLNKVFVMEYGKKNYSSKVSTRVSN. Asn-80 carries N-linked (GlcNAc...) asparagine glycosylation. A helical transmembrane segment spans residues 92 to 112; the sequence is AALVGIIFGQFFMGIAADYYS. At 113–114 the chain is on the cytoplasmic side; it reads RK. Residues 115–136 traverse the membrane as a helical segment; it reads SCILVATAILVIGSALCAASHG. The Extracellular portion of the chain corresponds to 137–138; the sequence is TT. A helical transmembrane segment spans residues 139–159; it reads VPGMFWMLTVMRGLVGIGVGA. The Cytoplasmic portion of the chain corresponds to 160-184; the sequence is EYPTSTLSANESANEYTTTKRGGIL. The helical transmembrane segment at 185 to 205 threads the bilayer; that stretch reads VMVTNLPLAFGGPFATIIFLI. Residues 206–216 are Extracellular-facing; the sequence is VYKICSGTKHL. The chain crosses the membrane as a helical span at residues 217 to 237; sequence EAIWRTVFAIGCFWPLSVFYF. The Cytoplasmic portion of the chain corresponds to 238–268; the sequence is RWKTATTEVYEKGRIKRNIPYFLALKFYWKR. Residues 269 to 289 form a helical membrane-spanning segment; sequence LLGTCGTWFMYDFVTFPNGIF. Residues 290-306 are Extracellular-facing; the sequence is SSTIISSVIKDQNDLVK. Residues 307-327 form a helical membrane-spanning segment; it reads VAEWNLLLGVLAVLGVPIGAY. Over 328–335 the chain is Cytoplasmic; it reads LSDRIGRK. Residues 336–356 form a helical membrane-spanning segment; it reads YTLMFGFSGYIIFGLIIGCAY. Over 357 to 360 the chain is Extracellular; the sequence is DQLK. The chain crosses the membrane as a helical span at residues 361 to 381; it reads KITPLFIIFYAFMNMLGNAGP. Topologically, residues 382–399 are cytoplasmic; sequence GDMLGVISSEASATAVRG. The chain crosses the membrane as a helical span at residues 400-420; it reads VFYGLSAVTGKIGSVVGVECF. Topologically, residues 421 to 430 are extracellular; sequence QPIRDNLGAR. Residues 431–451 form a helical membrane-spanning segment; it reads WTFIIAAICGLIGIIITYFFV. The Cytoplasmic portion of the chain corresponds to 452-518; the sequence is PHSLESDLMK…IISVRQVDQS (67 aa).

This sequence belongs to the major facilitator superfamily. Sugar transporter (TC 2.A.1.1) family.

It localises to the cell membrane. It carries out the reaction sn-glycerol 3-phosphocholine(out) = sn-glycerol 3-phosphocholine(in). It catalyses the reaction sn-glycero-3-phospho-1D-myo-inositol(out) = sn-glycero-3-phospho-1D-myo-inositol(in). Functionally, glycerophosphodiester transporter that mediates uptake of both glycerophosphoinositol (GroPIns) and glycerophosphocholine (GroPCho) as sources of the nutrients inositol and phosphate. This chain is Glycerophosphoinositol transporter 1, found in Saccharomyces cerevisiae (strain ATCC 204508 / S288c) (Baker's yeast).